The following is a 122-amino-acid chain: Urease subunit beta (122 aa).

The disordered stretch occupies residues 102–122; sequence DGGTAVAGEPRPGIAAERDHQ.

This sequence belongs to the urease beta subunit family. Heterotrimer of UreA (gamma), UreB (beta) and UreC (alpha) subunits. Three heterotrimers associate to form the active enzyme.

It is found in the cytoplasm. It catalyses the reaction urea + 2 H2O + H(+) = hydrogencarbonate + 2 NH4(+). It functions in the pathway nitrogen metabolism; urea degradation; CO(2) and NH(3) from urea (urease route): step 1/1. The protein is Urease subunit beta of Paenarthrobacter aurescens (strain TC1).